We begin with the raw amino-acid sequence, 703 residues long: Probable boron transporter 2 (703 aa).

Residues 1–35 lie on the Cytoplasmic side of the membrane; it reads MEETFVPFEGIKNDLKGRLMCYKQDWTGGIKAGFR. A helical transmembrane segment spans residues 36–56; it reads ILAPTTYIFFASAIPVISFGE. At 57-75 the chain is on the extracellular side; that stretch reads QLERSTDGVLTAVQTLAST. The helical transmembrane segment at 76–96 threads the bilayer; it reads AICGIIHSIIGGQPLLILGVA. At 97–120 the chain is on the cytoplasmic side; the sequence is EPTVIMYTFMFNFAKGRPELGRNL. The chain crosses the membrane as a helical span at residues 121–141; the sequence is FLAWSGWVCVWTSLILFVLAI. The Extracellular portion of the chain corresponds to 142 to 155; sequence CGACSFINRFTRVA. A helical membrane pass occupies residues 156-176; the sequence is GELFGLLIAMLFMQQAIKGLV. At 177 to 195 the chain is on the cytoplasmic side; that stretch reads DEFRAPAREDLKLVEFLPS. Residues 196–216 form a helical membrane-spanning segment; that stretch reads WRFANGMFALVLSFGLLITAL. The Extracellular portion of the chain corresponds to 217-233; sequence RSRKARSWRYGTGWLRS. The chain crosses the membrane as a helical span at residues 234–254; sequence LVADYGVPLMVLVWTGVSYIP. Residues 255 to 289 lie on the Cytoplasmic side of the membrane; that stretch reads TGDVPKGIPRRLFSPNPWSPGAYENWTVVKEMLQV. Residues 290–310 traverse the membrane as a helical segment; the sequence is PIVYIIGAFIPATMIAVLYYF. Topologically, residues 311–337 are extracellular; the sequence is DHSVASQLAQQKEFNLRKPSSYHYDLL. Residues 338–358 form a helical membrane-spanning segment; it reads LLGFLTLMCGLLGIPPSNGVI. At 359 to 480 the chain is on the cytoplasmic side; the sequence is PQSPMHTKSL…AVMVGGCVAA (122 aa). A helical membrane pass occupies residues 481–501; the sequence is MPLLKMIPTSVLWGYFAFMAI. Residues 502 to 557 are Extracellular-facing; the sequence is ESLPGNQFWERILLLFTAPSRRFKVLEDNHATFVETVPFKTIAMFTIFQTTYLLTC. The helical transmembrane segment at 558-578 threads the bilayer; sequence FGLTWIPIAGVMFPLLIMFLI. The Cytoplasmic segment spans residues 579 to 703; it reads PVRQYILPRF…SPLNPSSSSK (125 aa). The disordered stretch occupies residues 678–703; the sequence is EMSPRLSGKGQNSPKPSPLNPSSSSK.

Belongs to the anion exchanger (TC 2.A.31.3) family.

The protein resides in the membrane. In terms of biological role, probable boron transporter. Boron is essential for maintaining the integrity of plants cell walls. This chain is Probable boron transporter 2 (BOR2), found in Arabidopsis thaliana (Mouse-ear cress).